The primary structure comprises 34 residues: Photosystem II reaction center protein M (34 aa).

The chain crosses the membrane as a helical span at residues 5–25 (ILGLIATTLFILIPTSFLLIL).

Belongs to the PsbM family. As to quaternary structure, PSII is composed of 1 copy each of membrane proteins PsbA, PsbB, PsbC, PsbD, PsbE, PsbF, PsbH, PsbI, PsbJ, PsbK, PsbL, PsbM, PsbT, PsbX, PsbY, PsbZ, Psb30/Ycf12, at least 3 peripheral proteins of the oxygen-evolving complex and a large number of cofactors. It forms dimeric complexes.

The protein resides in the plastid. It localises to the chloroplast thylakoid membrane. One of the components of the core complex of photosystem II (PSII). PSII is a light-driven water:plastoquinone oxidoreductase that uses light energy to abstract electrons from H(2)O, generating O(2) and a proton gradient subsequently used for ATP formation. It consists of a core antenna complex that captures photons, and an electron transfer chain that converts photonic excitation into a charge separation. This subunit is found at the monomer-monomer interface. The protein is Photosystem II reaction center protein M of Pleurastrum terricola (Filamentous green alga).